The primary structure comprises 226 residues: UPF0173 metal-dependent hydrolase GWCH70_2696 (226 aa).

The protein belongs to the UPF0173 family.

This chain is UPF0173 metal-dependent hydrolase GWCH70_2696, found in Geobacillus sp. (strain WCH70).